We begin with the raw amino-acid sequence, 159 residues long: 3-dehydroquinate dehydratase (159 aa).

The Proton acceptor role is filled by Tyr-22. The substrate site is built by Asn-73, His-79, and Asp-86. His-99 acts as the Proton donor in catalysis. Residues 100–101 and Arg-110 each bind substrate; that span reads IS.

This sequence belongs to the type-II 3-dehydroquinase family. Homododecamer.

The catalysed reaction is 3-dehydroquinate = 3-dehydroshikimate + H2O. Its pathway is metabolic intermediate biosynthesis; chorismate biosynthesis; chorismate from D-erythrose 4-phosphate and phosphoenolpyruvate: step 3/7. Its function is as follows. Catalyzes a trans-dehydration via an enolate intermediate. This is 3-dehydroquinate dehydratase from Campylobacter jejuni subsp. doylei (strain ATCC BAA-1458 / RM4099 / 269.97).